The primary structure comprises 596 residues: V-type ATP synthase alpha chain (596 aa).

233–240 (GPFGAGKT) provides a ligand contact to ATP.

This sequence belongs to the ATPase alpha/beta chains family.

It carries out the reaction ATP + H2O + 4 H(+)(in) = ADP + phosphate + 5 H(+)(out). Its function is as follows. Produces ATP from ADP in the presence of a proton gradient across the membrane. The V-type alpha chain is a catalytic subunit. The polypeptide is V-type ATP synthase alpha chain (Streptococcus gordonii (strain Challis / ATCC 35105 / BCRC 15272 / CH1 / DL1 / V288)).